Here is a 326-residue protein sequence, read N- to C-terminus: Glycine N(alpha)-acyltransferase (326 aa).

It belongs to the acetyltransferase family.

The catalysed reaction is a (3R)-hydroxyacyl-[ACP] + glycine = a lyso-glycine lipid + holo-[ACP] + H(+). The enzyme catalyses (3R)-hydroxyhexadecanoyl-[ACP] + glycine = N-[(3R)-3-hydroxyhexadecanoyl]-glycine + holo-[ACP] + H(+). Its pathway is lipid metabolism. Is involved in the production of glycine lipids (GL), which are phosphorus-free membrane lipids. Catalyzes the first step of GL biosynthesis, i.e. the N-acylation of glycine via addition of a 3-hydroxy fatty acyl group, to form a range of monoacylated glycine (also named lyso-glycine lipids or lyso-GL). As an example, catalyzes the production of commendamide, an N-acylated (3-OH C16:0) derivative of glycine with hemolytic activity and the ability to solubilize cholesterol micelles; this compound can also activate NF-kB through the G-protein coupled receptor GPCR G2A/132. This Phocaeicola vulgatus (strain ATCC 8482 / DSM 1447 / JCM 5826 / CCUG 4940 / NBRC 14291 / NCTC 11154) (Bacteroides vulgatus) protein is Glycine N(alpha)-acyltransferase.